The chain runs to 233 residues: Probable dihydroorotate dehydrogenase B (NAD(+)), electron transfer subunit (233 aa).

An FAD-binding FR-type domain is found at 1-87; it reads MYRVVTIEEV…RGPYGHGFIK (87 aa). Residues cysteine 202, cysteine 207, cysteine 210, and cysteine 218 each contribute to the [2Fe-2S] cluster site.

This sequence belongs to the PyrK family. As to quaternary structure, heterotetramer of 2 PyrK and 2 PyrD type B subunits. [2Fe-2S] cluster serves as cofactor. Requires FAD as cofactor.

It functions in the pathway pyrimidine metabolism; UMP biosynthesis via de novo pathway; orotate from (S)-dihydroorotate (NAD(+) route): step 1/1. In terms of biological role, responsible for channeling the electrons from the oxidation of dihydroorotate from the FMN redox center in the PyrD type B subunit to the ultimate electron acceptor NAD(+). This Thermococcus kodakarensis (strain ATCC BAA-918 / JCM 12380 / KOD1) (Pyrococcus kodakaraensis (strain KOD1)) protein is Probable dihydroorotate dehydrogenase B (NAD(+)), electron transfer subunit.